Consider the following 433-residue polypeptide: 23S rRNA (uracil(1939)-C(5))-methyltransferase RlmD (433 aa).

Residues 10–68 (RTTTRQIITVSVNDLDSFGQGVARHNGKTLFIPGLLPQENAEVTVTEDKKQYARAKVVR) form the TRAM domain. [4Fe-4S] cluster-binding residues include cysteine 81, cysteine 87, cysteine 90, and cysteine 162. Residues glutamine 265, phenylalanine 294, asparagine 299, glutamate 315, asparagine 342, and aspartate 363 each contribute to the S-adenosyl-L-methionine site. Cysteine 389 functions as the Nucleophile in the catalytic mechanism.

Belongs to the class I-like SAM-binding methyltransferase superfamily. RNA M5U methyltransferase family. RlmD subfamily.

The catalysed reaction is uridine(1939) in 23S rRNA + S-adenosyl-L-methionine = 5-methyluridine(1939) in 23S rRNA + S-adenosyl-L-homocysteine + H(+). In terms of biological role, catalyzes the formation of 5-methyl-uridine at position 1939 (m5U1939) in 23S rRNA. The sequence is that of 23S rRNA (uracil(1939)-C(5))-methyltransferase RlmD from Escherichia coli O6:K15:H31 (strain 536 / UPEC).